The following is a 339-amino-acid chain: 4-amino-5-hydroxymethyl-2-methylpyrimidine phosphate synthase (339 aa).

N6-(pyridoxal phosphate)lysine is present on Lys-62. The active site involves His-66. Gly-115–Gly-118 is a binding site for pyridoxal 5'-phosphate. The CCCFC; essential for catalytic activity, may be the site of iron coordination signature appears at Cys-195–Cys-199.

The protein belongs to the NMT1/THI5 family. In terms of assembly, homodimer. Requires Fe(3+) as cofactor.

The enzyme catalyses N(6)-(pyridoxal phosphate)-L-lysyl-[4-amino-5-hydroxymethyl-2-methylpyrimidine phosphate synthase] + L-histidyl-[4-amino-5-hydroxymethyl-2-methylpyrimidine phosphate synthase] + 2 Fe(3+) + 4 H2O = L-lysyl-[4-amino-5-hydroxymethyl-2-methylpyrimidine phosphate synthase] + (2S)-2-amino-5-hydroxy-4-oxopentanoyl-[4-amino-5-hydroxymethyl-2-methylpyrimidine phosphate synthase] + 4-amino-2-methyl-5-(phosphooxymethyl)pyrimidine + 3-oxopropanoate + 2 Fe(2+) + 2 H(+). It participates in cofactor biosynthesis; thiamine diphosphate biosynthesis. In terms of biological role, responsible for the formation of the pyrimidine heterocycle in the thiamine biosynthesis pathway. Catalyzes the formation of hydroxymethylpyrimidine phosphate (HMP-P) from histidine and pyridoxal phosphate (PLP). The protein uses PLP and the active site histidine to form HMP-P, generating an inactive enzyme. The enzyme can only undergo a single turnover, which suggests it is a suicide enzyme. The polypeptide is 4-amino-5-hydroxymethyl-2-methylpyrimidine phosphate synthase (Candida albicans (strain WO-1) (Yeast)).